A 138-amino-acid chain; its full sequence is uncharacterized protein (138 aa).

Helical transmembrane passes span 17–37 (IVVS…TIYF), 43–63 (FTVV…LLVC), and 117–137 (FWWM…LVSL).

Its subcellular location is the cell membrane. This is an uncharacterized protein from Mycoplasma genitalium (strain ATCC 33530 / DSM 19775 / NCTC 10195 / G37) (Mycoplasmoides genitalium).